The sequence spans 198 residues: NADH-quinone oxidoreductase subunit C (198 aa).

The protein belongs to the complex I 30 kDa subunit family. In terms of assembly, NDH-1 is composed of 14 different subunits. Subunits NuoB, C, D, E, F, and G constitute the peripheral sector of the complex.

Its subcellular location is the cell inner membrane. It carries out the reaction a quinone + NADH + 5 H(+)(in) = a quinol + NAD(+) + 4 H(+)(out). In terms of biological role, NDH-1 shuttles electrons from NADH, via FMN and iron-sulfur (Fe-S) centers, to quinones in the respiratory chain. The immediate electron acceptor for the enzyme in this species is believed to be ubiquinone. Couples the redox reaction to proton translocation (for every two electrons transferred, four hydrogen ions are translocated across the cytoplasmic membrane), and thus conserves the redox energy in a proton gradient. The protein is NADH-quinone oxidoreductase subunit C of Chromobacterium violaceum (strain ATCC 12472 / DSM 30191 / JCM 1249 / CCUG 213 / NBRC 12614 / NCIMB 9131 / NCTC 9757 / MK).